A 155-amino-acid chain; its full sequence is Large ribosomal subunit protein uL15 (155 aa).

Positions 1-13 (MKLNELRDAEGAT) are enriched in basic and acidic residues. The disordered stretch occupies residues 1–41 (MKLNELRDAEGATKARKRVGRGIGSGSGKTGGRGVKGQKSR). A compositionally biased stretch (gly residues) spans 21–35 (RGIGSGSGKTGGRGV).

Belongs to the universal ribosomal protein uL15 family. As to quaternary structure, part of the 50S ribosomal subunit.

In terms of biological role, binds to the 23S rRNA. The chain is Large ribosomal subunit protein uL15 from Chelativorans sp. (strain BNC1).